The chain runs to 240 residues: uncharacterized protein (240 aa).

Residues 26 to 52 (DYVDDGESLPTRQSVKNQREQKKKQGK) form a disordered region. Residues 57–77 (LFTVLAVIFVFVPVIVLVTLF) form a helical membrane-spanning segment. The disordered stretch occupies residues 100-185 (KYEVVPKSED…QPAEPVQNVP (86 aa)). Over residues 103–159 (VVPKSEDKNDTADTKETALQKESKKEPEDSKPKEQTAADKKQTAVAEKEDSPNKEEA) the composition is skewed to basic and acidic residues. The segment covering 160–185 (TAAAASSSQSTVQQQEQPAEPVQNVP) has biased composition (low complexity). A LysM domain is found at 189-235 (VKHTVQKKETLYRISMKYYKSRTGEEKIRAYNHLNGNDVYTGQVLDI).

The protein resides in the membrane. This is an uncharacterized protein from Bacillus subtilis (strain 168).